The following is a 521-amino-acid chain: uncharacterized protein (521 aa).

Positions 14-41 (QFQQMQHQMQQQQQQQMQQQQQQQQQQQ) form a coiled coil. Composition is skewed to low complexity over residues 238–266 (LSGS…TSSS), 275–353 (SSTS…NNNN), and 423–482 (PRLS…PNNP). Disordered stretches follow at residues 238–357 (LSGS…ISGF) and 413–491 (TAVA…SNNG).

This is an uncharacterized protein from Dictyostelium discoideum (Social amoeba).